The primary structure comprises 220 residues: Glutathione S-transferase U23 (220 aa).

The GST N-terminal domain maps to 3-82; that stretch reads EEIILLDYWA…YIDELWPDTN (80 aa). Glutathione is bound by residues 13–14, 39–40, 53–54, and 66–67; these read SM, NK, KI, and ES. The 121-residue stretch at 88–208 folds into the GST C-terminal domain; that stretch reads DPYQRAQARF…LPDSDKVLKS (121 aa).

This sequence belongs to the GST superfamily. Tau family.

It localises to the cytoplasm. The protein resides in the cytosol. It catalyses the reaction RX + glutathione = an S-substituted glutathione + a halide anion + H(+). In terms of biological role, may be involved in the conjugation of reduced glutathione to a wide number of exogenous and endogenous hydrophobic electrophiles and have a detoxification role against certain herbicides. This chain is Glutathione S-transferase U23 (GSTU23), found in Arabidopsis thaliana (Mouse-ear cress).